Reading from the N-terminus, the 250-residue chain is Pyridoxine 5'-phosphate synthase (250 aa).

N11 is a 3-amino-2-oxopropyl phosphate binding site. 1-deoxy-D-xylulose 5-phosphate is bound at residue 13–14; sequence DH. R22 lines the 3-amino-2-oxopropyl phosphate pocket. The Proton acceptor role is filled by H47. 2 residues coordinate 1-deoxy-D-xylulose 5-phosphate: R49 and H54. The Proton acceptor role is filled by E74. Residue T104 coordinates 1-deoxy-D-xylulose 5-phosphate. H198 acts as the Proton donor in catalysis. 3-amino-2-oxopropyl phosphate-binding positions include G199 and 220 to 221; that span reads GY.

The protein belongs to the PNP synthase family. In terms of assembly, homooctamer; tetramer of dimers.

The protein resides in the cytoplasm. The enzyme catalyses 3-amino-2-oxopropyl phosphate + 1-deoxy-D-xylulose 5-phosphate = pyridoxine 5'-phosphate + phosphate + 2 H2O + H(+). The protein operates within cofactor biosynthesis; pyridoxine 5'-phosphate biosynthesis; pyridoxine 5'-phosphate from D-erythrose 4-phosphate: step 5/5. In terms of biological role, catalyzes the complicated ring closure reaction between the two acyclic compounds 1-deoxy-D-xylulose-5-phosphate (DXP) and 3-amino-2-oxopropyl phosphate (1-amino-acetone-3-phosphate or AAP) to form pyridoxine 5'-phosphate (PNP) and inorganic phosphate. The protein is Pyridoxine 5'-phosphate synthase of Bradyrhizobium diazoefficiens (strain JCM 10833 / BCRC 13528 / IAM 13628 / NBRC 14792 / USDA 110).